Here is a 126-residue protein sequence, read N- to C-terminus: Ribosome-binding factor A (126 aa).

This sequence belongs to the RbfA family. In terms of assembly, monomer. Binds 30S ribosomal subunits, but not 50S ribosomal subunits or 70S ribosomes.

It localises to the cytoplasm. Its function is as follows. One of several proteins that assist in the late maturation steps of the functional core of the 30S ribosomal subunit. Associates with free 30S ribosomal subunits (but not with 30S subunits that are part of 70S ribosomes or polysomes). Required for efficient processing of 16S rRNA. May interact with the 5'-terminal helix region of 16S rRNA. The sequence is that of Ribosome-binding factor A from Haemophilus ducreyi (strain 35000HP / ATCC 700724).